We begin with the raw amino-acid sequence, 464 residues long: Soluble pyridine nucleotide transhydrogenase (464 aa).

An FAD-binding site is contributed by 35–44 (EDKSQVGGNC).

This sequence belongs to the class-I pyridine nucleotide-disulfide oxidoreductase family. FAD is required as a cofactor.

It localises to the cytoplasm. It carries out the reaction NAD(+) + NADPH = NADH + NADP(+). Functionally, conversion of NADPH, generated by peripheral catabolic pathways, to NADH, which can enter the respiratory chain for energy generation. In Hahella chejuensis (strain KCTC 2396), this protein is Soluble pyridine nucleotide transhydrogenase.